The chain runs to 245 residues: 1-(5-phosphoribosyl)-5-[(5-phosphoribosylamino)methylideneamino] imidazole-4-carboxamide isomerase (245 aa).

Catalysis depends on aspartate 7, which acts as the Proton acceptor. Aspartate 129 acts as the Proton donor in catalysis.

This sequence belongs to the HisA/HisF family.

It localises to the cytoplasm. The catalysed reaction is 1-(5-phospho-beta-D-ribosyl)-5-[(5-phospho-beta-D-ribosylamino)methylideneamino]imidazole-4-carboxamide = 5-[(5-phospho-1-deoxy-D-ribulos-1-ylimino)methylamino]-1-(5-phospho-beta-D-ribosyl)imidazole-4-carboxamide. It participates in amino-acid biosynthesis; L-histidine biosynthesis; L-histidine from 5-phospho-alpha-D-ribose 1-diphosphate: step 4/9. In Aliivibrio fischeri (strain MJ11) (Vibrio fischeri), this protein is 1-(5-phosphoribosyl)-5-[(5-phosphoribosylamino)methylideneamino] imidazole-4-carboxamide isomerase.